The following is a 223-amino-acid chain: Protein DEHYDRATION-INDUCED 19 homolog 3 (223 aa).

Thr114 is modified (phosphothreonine). Ser116 carries the post-translational modification Phosphoserine.

The protein belongs to the Di19 family. Phosphorylated in vitro by CPK3 or CPK11. Expressed in seedlings, roots, leaves, stems, flowers and siliques.

It localises to the nucleus. The sequence is that of Protein DEHYDRATION-INDUCED 19 homolog 3 (DI19-3) from Arabidopsis thaliana (Mouse-ear cress).